The primary structure comprises 60 residues: LLTLAVLLMVSADMAFAGFGCPGDQYECNRHCRSIGCRAGYCDAVTLWLRCTCTGCSGKK.

Positions 1 to 17 (LLTLAVLLMVSADMAFA) are cleaved as a signal peptide. Beta-D-GlcNAc-(1-&gt;4)-Mur2Ac(oyl-L-Ala-gamma-D-Glu-L-Lys-D-Ala-D-Ala)-di-trans,octa-cis-undecaprenyl diphosphate contacts are provided by Phe-19, Gly-20, and Cys-21. Intrachain disulfides connect Cys-21–Cys-42, Cys-28–Cys-51, Cys-32–Cys-53, and Cys-37–Cys-56. The tract at residues 22–25 (PGDQ) is binds to membrane interface. Residue His-31 participates in beta-D-GlcNAc-(1-&gt;4)-Mur2Ac(oyl-L-Ala-gamma-D-Glu-L-Lys-D-Ala-D-Ala)-di-trans,octa-cis-undecaprenyl diphosphate binding. A binds to membrane interface region spans residues 43 to 49 (DAVTLWL). Position 51 (Cys-51) interacts with beta-D-GlcNAc-(1-&gt;4)-Mur2Ac(oyl-L-Ala-gamma-D-Glu-L-Lys-D-Ala-D-Ala)-di-trans,octa-cis-undecaprenyl diphosphate.

This sequence belongs to the invertebrate defensin family. In terms of tissue distribution, expressed in hemocytes.

The protein localises to the secreted. It localises to the target cell membrane. Functionally, antibacterial peptide mostly active against Gram-positive bacteria. It acts by selectively inhibiting peptidoglycan biosynthesis through complex formation with the cell wall precursor lipid II (1:1 molar ratio) thus inhibiting cell wall synthesis. It does not disrupt cell membranes. Is noticeably more potent than Cg-Defh1. The chain is Hemocyte defensin Cg-Defh2 from Magallana gigas (Pacific oyster).